A 547-amino-acid chain; its full sequence is Ribosome protection protein VmlR (547 aa).

The 196-residue stretch at 5-200 folds into the ABC transporter 1 domain; the sequence is VTLTNVSYEV…FREKKRLTQQ (196 aa). 37 to 44 is an ATP binding site; it reads GKNGAGKS. The segment at 183-289 is antibiotic resistance domain (ARD); that stretch reads GNYSGYMKFR…SIDTTHKTGK (107 aa). Coiled-coil stretches lie at residues 193 to 222 and 245 to 269; these read EKKR…GLAS and AKRT…AKAE. Residues 292-504 form the ABC transporter 2 domain; the sequence is LEVQNVTKAF…REELRLKLET (213 aa). 324-331 serves as a coordination point for ATP; that stretch reads GPNGSGKT. Residues 483-547 form a C-terminal extension (CTE) region; sequence KQLNDVPSER…KELDHQDKKD (65 aa). The stretch at 488–543 forms a coiled coil; sequence VPSERNEREELRLKLETERQEVLGKLSFMTPNDKGYKELDQAFNELTKRIKELDHQ.

Belongs to the ABC transporter superfamily. ABCF family. ARE2 subfamily. As to quaternary structure, binds within the E-site of the 70S ribosome, where it contacts ribosomal proteins L1, L5, L33-1, S7, S11, the 16 and 23S rRNAs and the acceptor arm of the P-site tRNA.

The protein resides in the cytoplasm. Functionally, recognizes and binds in the vacant E-site of ribosomes stalled by some peptidyltransferase center (PTC)-targeting antibiotics. Makes contact with the PTC and both ribosomal subunits. Induces conformational changes in the P-site, which allows it to dislodge the antibiotic from its PTC binding site. Binds to ribosomes either directly following translation initation or subsequent to E tRNA release during elongation. Involved in resistance to a narrow spectrum of antibiotics (the streptogramin A antibiotic virginiamycin M, the lincosamide antibiotic lincomycin and the pleuromutilin antibiotic tiamulin). The protein is Ribosome protection protein VmlR of Bacillus subtilis (strain 168).